The chain runs to 510 residues: NAD(P)H-quinone oxidoreductase subunit 2 A, chloroplastic (510 aa).

Transmembrane regions (helical) follow at residues 24-44, 57-77, 99-119, 124-144, 149-169, 183-203, 227-247, 295-315, 323-343, 354-374, 395-415, 418-438, and 484-504; these read LLLF…GLIL, IPWL…ALLF, IFQF…VEYI, MAIT…MFLC, LITI…LSGY, YLLM…WLYG, PGIS…LSPA, WHLL…LIAI, MLAY…IVGD, YMLF…LFGL, ALSL…AGFF, LYLF…IGLL, and MIVC…IIAI.

This sequence belongs to the complex I subunit 2 family. In terms of assembly, NDH is composed of at least 16 different subunits, 5 of which are encoded in the nucleus.

Its subcellular location is the plastid. The protein localises to the chloroplast thylakoid membrane. It carries out the reaction a plastoquinone + NADH + (n+1) H(+)(in) = a plastoquinol + NAD(+) + n H(+)(out). The catalysed reaction is a plastoquinone + NADPH + (n+1) H(+)(in) = a plastoquinol + NADP(+) + n H(+)(out). Its function is as follows. NDH shuttles electrons from NAD(P)H:plastoquinone, via FMN and iron-sulfur (Fe-S) centers, to quinones in the photosynthetic chain and possibly in a chloroplast respiratory chain. The immediate electron acceptor for the enzyme in this species is believed to be plastoquinone. Couples the redox reaction to proton translocation, and thus conserves the redox energy in a proton gradient. The chain is NAD(P)H-quinone oxidoreductase subunit 2 A, chloroplastic from Solanum lycopersicum (Tomato).